Consider the following 254-residue polypeptide: Germin-like protein 4-1 (254 aa).

An N-terminal signal peptide occupies residues 1-27 (MASRAFAAVFAAVALVVCSSVLPRALA). Cysteines 37 and 52 form a disulfide. Positions 67–220 (KALGVPGNTV…AFMIDKDQVD (154 aa)) constitute a Cupin type-1 domain. The Mn(2+) site is built by His-115, His-117, Glu-122, and His-166.

The protein belongs to the germin family. Oligomer (believed to be a pentamer but probably hexamer).

It localises to the secreted. It is found in the extracellular space. Its subcellular location is the apoplast. In terms of biological role, may play a role in plant defense. Probably has no oxalate oxidase activity even if the active site is conserved. The protein is Germin-like protein 4-1 of Oryza sativa subsp. japonica (Rice).